Reading from the N-terminus, the 102-residue chain is Carboxysome shell protein CsoS1C (102 aa).

One can recognise a BMC domain in the interval 8 to 93 (ALGMIETRGL…PHKEVEPVLA (86 aa)).

The protein belongs to the bacterial microcompartments protein family. CsoS1 subfamily. Homohexamer with a small central pore.

It is found in the carboxysome. One of shell proteins of the carboxysome, a polyhedral inclusion where RuBisCO (ribulose bisphosphate carboxylase, ccbL-ccbS) is sequestered. Assembles into hexamers which make sheets that form the facets of the polyhedral carboxysome. The shell probably limits the diffusion of CO(2) into and out of the carboxysome. This chain is Carboxysome shell protein CsoS1C, found in Hydrogenovibrio crunogenus (strain DSM 25203 / XCL-2) (Thiomicrospira crunogena).